The primary structure comprises 75 residues: Small capsomere-interacting protein (75 aa).

Belongs to the herpesviridae small capsomere-interacting protein family. As to quaternary structure, interacts with the major capsid protein/MCP.

Its subcellular location is the virion. It localises to the host nucleus. In terms of biological role, participates in the assembly of the infectious particles by decorating the outer surface of the capsid shell and thus forming a layer between the capsid and the tegument. Complexes composed of the major capsid protein and small capsomere-interacting protein/SCP assemble together in the host cytoplasm and are translocated to the nucleus, where they accumulate and participate in capsid assembly. This Homo sapiens (Human) protein is Small capsomere-interacting protein.